Reading from the N-terminus, the 1271-residue chain is Chitin synthase 4 (1271 aa).

Disordered stretches follow at residues 1–45 and 58–117; these read MPPT…SFDH and PNHP…ERPS. Polar residues predominate over residues 21 to 30; sequence APDTQESSPA. 2 helical membrane passes run 165–185 and 201–221; these read WWIR…LVHL and LAIF…IIFF. A glycan (N-linked (GlcNAc...) asparagine) is linked at Asn407. A helical transmembrane segment spans residues 473–493; that stretch reads LLLAFSIILIATIASKFLAAL. Residues Asn713 and Asn836 are each glycosylated (N-linked (GlcNAc...) asparagine). Transmembrane regions (helical) follow at residues 867 to 887, 894 to 914, and 919 to 939; these read LLGT…VIVV, IPVI…LIFI, and FMLI…SVFL. Residues 999–1081 form a disordered region; that stretch reads HSESPAPSEK…DKSFIRGSKP (83 aa). A compositionally biased stretch (polar residues) spans 1027–1037; the sequence is RSPSFHSSASE. Asn1055 and Asn1161 each carry an N-linked (GlcNAc...) asparagine glycan. The DEK-C domain maps to 1213–1269; that stretch reads EVQDEEVLDKLKTWLSKQDLMSVTKRQTREAIYTLFPNAGLQNRAGWLNEQIDKILS.

The protein belongs to the chitin synthase family.

The protein localises to the cell membrane. The enzyme catalyses [(1-&gt;4)-N-acetyl-beta-D-glucosaminyl](n) + UDP-N-acetyl-alpha-D-glucosamine = [(1-&gt;4)-N-acetyl-beta-D-glucosaminyl](n+1) + UDP + H(+). In terms of biological role, polymerizes chitin, a structural polymer of the cell wall and septum, by transferring the sugar moiety of UDP-GlcNAc to the non-reducing end of the growing chitin polymer. Produces a large proportion of the chitin that is not deacetylated to chitosan. This is Chitin synthase 4 from Cryptococcus neoformans var. grubii serotype A (strain H99 / ATCC 208821 / CBS 10515 / FGSC 9487) (Filobasidiella neoformans var. grubii).